Reading from the N-terminus, the 122-residue chain is UPF0231 protein VF_2154 (122 aa).

Belongs to the UPF0231 family.

This Aliivibrio fischeri (strain ATCC 700601 / ES114) (Vibrio fischeri) protein is UPF0231 protein VF_2154.